We begin with the raw amino-acid sequence, 268 residues long: Leucyl/phenylalanyl-tRNA--protein transferase (268 aa).

This sequence belongs to the L/F-transferase family.

It localises to the cytoplasm. The catalysed reaction is N-terminal L-lysyl-[protein] + L-leucyl-tRNA(Leu) = N-terminal L-leucyl-L-lysyl-[protein] + tRNA(Leu) + H(+). It carries out the reaction N-terminal L-arginyl-[protein] + L-leucyl-tRNA(Leu) = N-terminal L-leucyl-L-arginyl-[protein] + tRNA(Leu) + H(+). The enzyme catalyses L-phenylalanyl-tRNA(Phe) + an N-terminal L-alpha-aminoacyl-[protein] = an N-terminal L-phenylalanyl-L-alpha-aminoacyl-[protein] + tRNA(Phe). In terms of biological role, functions in the N-end rule pathway of protein degradation where it conjugates Leu, Phe and, less efficiently, Met from aminoacyl-tRNAs to the N-termini of proteins containing an N-terminal arginine or lysine. This is Leucyl/phenylalanyl-tRNA--protein transferase from Zymomonas mobilis subsp. mobilis (strain ATCC 31821 / ZM4 / CP4).